The sequence spans 400 residues: GTPase-binding protein rid1 (400 aa).

Residues 16 to 27 (LSSDGLSESVNS) show a composition bias toward polar residues. Residues 16–47 (LSSDGLSESVNSSDREDSLSFQTPSTPSEDEM) are disordered. In terms of domain architecture, GBD/FH3 spans 39-400 (PSTPSEDEMP…PYKLVQTGST (362 aa)).

It localises to the cytoplasm. This is GTPase-binding protein rid1 (rid1) from Schizosaccharomyces pombe (strain 972 / ATCC 24843) (Fission yeast).